Reading from the N-terminus, the 1113-residue chain is Protein translocase subunit SecA (1113 aa).

ATP is bound by residues Gln175, 193 to 197 (GEGKT), and Asp694. Residues 1042–1072 (RHAAEQRTDMSKYRTQKDDIEAQQKAQRDAA) are compositionally biased toward basic and acidic residues. Residues 1042–1113 (RHAAEQRTDM…KFKQCHGRNL (72 aa)) form a disordered region. Zn(2+) contacts are provided by Cys1097, Cys1099, Cys1108, and His1109. Residues 1103 to 1113 (KKFKQCHGRNL) show a composition bias toward basic residues.

It belongs to the SecA family. In terms of assembly, monomer and homodimer. Part of the essential Sec protein translocation apparatus which comprises SecA, SecYEG and auxiliary proteins SecDF. Other proteins may also be involved. Zn(2+) serves as cofactor.

The protein resides in the cell inner membrane. It localises to the cytoplasm. The catalysed reaction is ATP + H2O + cellular proteinSide 1 = ADP + phosphate + cellular proteinSide 2.. Part of the Sec protein translocase complex. Interacts with the SecYEG preprotein conducting channel. Has a central role in coupling the hydrolysis of ATP to the transfer of proteins into and across the cell membrane, serving as an ATP-driven molecular motor driving the stepwise translocation of polypeptide chains across the membrane. The sequence is that of Protein translocase subunit SecA from Porphyromonas gingivalis (strain ATCC 33277 / DSM 20709 / CIP 103683 / JCM 12257 / NCTC 11834 / 2561).